The primary structure comprises 316 residues: Epoxide hydrolase 2 (316 aa).

The AB hydrolase-1 domain maps to 25–302; that stretch reads PAVLFLHGFP…AAHFINQERP (278 aa). D101 acts as the Nucleophile in catalysis. Y150 is an an epoxide binding site. Catalysis depends on Y230, which acts as the Proton donor. The active-site Proton acceptor is H295.

It belongs to the AB hydrolase superfamily. Epoxide hydrolase family. As to quaternary structure, homodimer. In terms of tissue distribution, highly expressed in young fruits 15 days after anthesis (15-DAA). Also observed in stems and leaves.

The enzyme catalyses an epoxide + H2O = an ethanediol. It carries out the reaction (24S)-24,25-epoxycucurbitadienol + H2O = (24R)-24,25-dihydroxycucurbitadienol. It functions in the pathway secondary metabolite biosynthesis; terpenoid biosynthesis. Its function is as follows. Epoxide hydrolase involved in the biosynthesis of cucurbitacin and mogroside tetracyclic triterpene natural products (e.g. siamenoside I and mogrosides IV, V and VI). Cucurbitacins have cytotoxic properties and exhibit deterrent taste as a defense barrier against herbivores. Mogrosides are nonsugar highly oxygenated compounds used as high-intensity zero-calorie sweeteners; they also possess pharmacological properties such as regulating immunity, lowering blood sugar and lipid levels, protecting the liver, and acting as antioxidants and antitumor agents. Catalyzes the hydrolysis of aromatic epoxide-containing substrates, such as the conversion of 24,25-epoxycucurbitadienol to 24,25-dihydroxycucurbitadienol. The polypeptide is Epoxide hydrolase 2 (Siraitia grosvenorii (Monk's fruit)).